We begin with the raw amino-acid sequence, 348 residues long: Secreted frizzled-related protein 4 (348 aa).

The N-terminal stretch at Met1 to Gly18 is a signal peptide. The FZ domain maps to Val19–Pro139. 5 disulfides stabilise this stretch: Cys24-Cys85, Cys32-Cys78, Cys69-Cys108, Cys97-Cys136, and Cys101-Cys125. N-linked (GlcNAc...) asparagine glycans are attached at residues Asn38 and Asn68. N-linked (GlcNAc...) asparagine glycosylation is found at Asn116, Asn194, and Asn240. Residues Cys178–Arg296 form the NTR domain. Residues Glu289–Gln303 are compositionally biased toward basic and acidic residues. The segment at Glu289–Ser348 is disordered. The segment covering Lys330 to Ser348 has biased composition (basic residues).

The protein belongs to the secreted frizzled-related protein (sFRP) family. As to expression, expressed in the involuting mammary gland, ovarian corpus luteum and prostate. In ovaries, low levels found in granulosa cells. High levels in corpora lutea of pregnant animals.

It is found in the secreted. In terms of biological role, soluble frizzled-related proteins (sFRPS) function as modulators of Wnt signaling through direct interaction with Wnts. They have a role in regulating cell growth and differentiation in specific cell types. SFRP4 plays a role in bone morphogenesis. May also act as a regulator of adult uterine morphology and function. May also increase apoptosis during ovulation possibly through modulation of FZ1/FZ4/WNT4 signaling. Has phosphaturic effects by specifically inhibiting sodium-dependent phosphate uptake. The sequence is that of Secreted frizzled-related protein 4 (Sfrp4) from Rattus norvegicus (Rat).